Here is a 282-residue protein sequence, read N- to C-terminus: HTH-type transcriptional activator RhaR (282 aa).

One can recognise an HTH araC/xylS-type domain in the interval 179–277 (DKLITRLAAS…GMTPSQWRHL (99 aa)). DNA-binding regions (H-T-H motif) lie at residues 196–217 (DKFCDEASCSERVLRQQFRQQT) and 244–267 (ISDISTECGFEDSNYFSVVFTRET).

In terms of assembly, binds DNA as a dimer.

The protein localises to the cytoplasm. Its function is as follows. Activates expression of the rhaSR operon in response to L-rhamnose. The protein is HTH-type transcriptional activator RhaR of Shigella flexneri serotype 5b (strain 8401).